The following is a 464-amino-acid chain: DNA primase DnaG (464 aa).

In terms of domain architecture, Toprim spans 198-272 (DSIIVVEGRA…DVDYVARAPE (75 aa)). Residues E204, D246, and D248 each contribute to the Mg(2+) site. The span at 315–333 (RESEGERQPRQVTKPEPEV) shows a compositional bias: basic and acidic residues. Residues 315–351 (RESEGERQPRQVTKPEPEVVKAQPKAETPEEKREPAT) form a disordered region.

The protein belongs to the archaeal DnaG primase family. In terms of assembly, forms a ternary complex with MCM helicase and DNA. Component of the archaeal exosome complex. Mg(2+) is required as a cofactor.

The enzyme catalyses ssDNA + n NTP = ssDNA/pppN(pN)n-1 hybrid + (n-1) diphosphate.. Functionally, RNA polymerase that catalyzes the synthesis of short RNA molecules used as primers for DNA polymerase during DNA replication. Also part of the exosome, which is a complex involved in RNA degradation. Acts as a poly(A)-binding protein that enhances the interaction between heteromeric, adenine-rich transcripts and the exosome. This Thermococcus kodakarensis (strain ATCC BAA-918 / JCM 12380 / KOD1) (Pyrococcus kodakaraensis (strain KOD1)) protein is DNA primase DnaG.